Here is a 90-residue protein sequence, read N- to C-terminus: UPF0335 protein bsl7135 (90 aa).

This sequence belongs to the UPF0335 family.

The chain is UPF0335 protein bsl7135 from Bradyrhizobium diazoefficiens (strain JCM 10833 / BCRC 13528 / IAM 13628 / NBRC 14792 / USDA 110).